Here is a 211-residue protein sequence, read N- to C-terminus: DNA-directed RNA polymerases I, II, and III subunit RPABC1 (211 aa).

The protein belongs to the archaeal Rpo5/eukaryotic RPB5 RNA polymerase subunit family. Component of the RNA polymerase I (Pol I), RNA polymerase II (Pol II) and RNA polymerase III (Pol III) complexes consisting of at least 13, 12 and 17 subunits, respectively. In RNA Pol II, this subunit is present in 2-fold molar excess over the other subunits.

The protein localises to the nucleus. DNA-dependent RNA polymerase catalyzes the transcription of DNA into RNA using the four ribonucleoside triphosphates as substrates. Common component of RNA polymerases I, II and III which synthesize ribosomal RNA precursors, mRNA precursors and many functional non-coding RNAs, and small RNAs, such as 5S rRNA and tRNAs, respectively. Pol II is the central component of the basal RNA polymerase II transcription machinery. Pols are composed of mobile elements that move relative to each other. In Pol II, RPB5 is part of the lower jaw surrounding the central large cleft and thought to grab the incoming DNA template. Seems to be the major component in this process. The polypeptide is DNA-directed RNA polymerases I, II, and III subunit RPABC1 (rpb-5) (Caenorhabditis elegans).